We begin with the raw amino-acid sequence, 187 residues long: Probable GTP-binding protein EngB (187 aa).

The EngB-type G domain occupies 18-187; that stretch reads KNSEIAFWGR…KLKENINSNF (170 aa). Residues 26–33, 52–56, 70–73, 137–140, and 168–170 each bind GTP; these read GRSNVGKS, GRTQL, DLPG, TKID, and VSS. Mg(2+)-binding residues include Ser-33 and Thr-54.

This sequence belongs to the TRAFAC class TrmE-Era-EngA-EngB-Septin-like GTPase superfamily. EngB GTPase family. Mg(2+) serves as cofactor.

Its function is as follows. Necessary for normal cell division and for the maintenance of normal septation. This is Probable GTP-binding protein EngB from Mycoplasmopsis synoviae (strain 53) (Mycoplasma synoviae).